The sequence spans 437 residues: Probable indole-3-pyruvate monooxygenase YUCCA3 (437 aa).

Position 41–46 (41–46 (GAGPSG)) interacts with FAD. 212–217 (GCGNSG) contributes to the NADP(+) binding site.

Belongs to the FMO family. It depends on FAD as a cofactor.

The enzyme catalyses indole-3-pyruvate + NADPH + O2 + H(+) = (indol-3-yl)acetate + CO2 + NADP(+) + H2O. It participates in plant hormone metabolism; auxin biosynthesis. Involved in auxin biosynthesis. Belongs to the set of redundant YUCCA genes probably responsible for auxin biosynthesis in roots. The chain is Probable indole-3-pyruvate monooxygenase YUCCA3 (YUC3) from Arabidopsis thaliana (Mouse-ear cress).